A 369-amino-acid chain; its full sequence is Chorismate synthase (369 aa).

Positions 48 and 54 each coordinate NADP(+). FMN contacts are provided by residues 125-127 (RSS), 238-239 (NA), G278, 293-297 (KPTSS), and R319.

The protein belongs to the chorismate synthase family. As to quaternary structure, homotetramer. The cofactor is FMNH2.

It catalyses the reaction 5-O-(1-carboxyvinyl)-3-phosphoshikimate = chorismate + phosphate. It functions in the pathway metabolic intermediate biosynthesis; chorismate biosynthesis; chorismate from D-erythrose 4-phosphate and phosphoenolpyruvate: step 7/7. Its function is as follows. Catalyzes the anti-1,4-elimination of the C-3 phosphate and the C-6 proR hydrogen from 5-enolpyruvylshikimate-3-phosphate (EPSP) to yield chorismate, which is the branch point compound that serves as the starting substrate for the three terminal pathways of aromatic amino acid biosynthesis. This reaction introduces a second double bond into the aromatic ring system. In Cupriavidus metallidurans (strain ATCC 43123 / DSM 2839 / NBRC 102507 / CH34) (Ralstonia metallidurans), this protein is Chorismate synthase.